Here is a 622-residue protein sequence, read N- to C-terminus: Type 2 DNA topoisomerase 6 subunit B (622 aa).

ATP contacts are provided by residues N48, D80, 101-102 (SR), 111-118 (GQQGIGIS), and K435.

Belongs to the TOP6B family. In terms of assembly, homodimer. Heterotetramer of two Top6A and two Top6B chains.

It carries out the reaction ATP-dependent breakage, passage and rejoining of double-stranded DNA.. Its function is as follows. Relaxes both positive and negative superturns and exhibits a strong decatenase activity. This chain is Type 2 DNA topoisomerase 6 subunit B, found in Methanococcoides burtonii (strain DSM 6242 / NBRC 107633 / OCM 468 / ACE-M).